A 182-amino-acid polypeptide reads, in one-letter code: Large ribosomal subunit protein uL6 (182 aa).

Belongs to the universal ribosomal protein uL6 family. As to quaternary structure, part of the 50S ribosomal subunit.

This protein binds to the 23S rRNA, and is important in its secondary structure. It is located near the subunit interface in the base of the L7/L12 stalk, and near the tRNA binding site of the peptidyltransferase center. This Methanococcus maripaludis (strain C7 / ATCC BAA-1331) protein is Large ribosomal subunit protein uL6.